Consider the following 110-residue polypeptide: Class I hydrophobin 2 (110 aa).

The N-terminal stretch at 1-19 (MFARAASVFVLSLPILATA) is a signal peptide. 4 disulfide bridges follow: Cys29–Cys89, Cys36–Cys83, Cys37–Cys70, and Cys90–Cys103.

It belongs to the fungal hydrophobin family. In terms of assembly, self-assembles to form functional amyloid fibrils called rodlets. Self-assembly into fibrillar rodlets occurs spontaneously at hydrophobic:hydrophilic interfaces and the rodlets further associate laterally to form amphipathic monolayers.

It localises to the secreted. The protein resides in the cell wall. Its function is as follows. Aerial growth, conidiation, and dispersal of filamentous fungi in the environment rely upon a capability of their secreting small amphipathic proteins called hydrophobins (HPBs) with low sequence identity. Class I can self-assemble into an outermost layer of rodlet bundles on aerial cell surfaces, conferring cellular hydrophobicity that supports fungal growth, development and dispersal; whereas Class II form highly ordered films at water-air interfaces through intermolecular interactions but contribute nothing to the rodlet structure. Pnh2 is a class I hydrophobin that might be involved in the attachment of the hydrophilic wall of hyphae to the hydrophobic surface of wood under inorganic phosphate (Pi)-deficient conditions and enable the mycelium to degrade efficiently the components of wood and to acquire nutrients containing Pi. This is Class I hydrophobin 2 from Pholiota nameko.